Consider the following 419-residue polypeptide: Methyltransferase/ribosomally synthesized type I borosin cyclic peptide precursor gjuMa (419 aa).

The segment at 1–255 (MATPIATTTN…AISTLYVPPR (255 aa)) is methyltransferase domain. Active-site residues include arginine 79, tyrosine 83, and tyrosine 105. Positions 105, 107, 110, 137, 179, 217, 248, and 249 each coordinate S-adenosyl-L-methionine. The interval 256 to 381 (DISPVDPTMA…GAVYALMSRP (126 aa)) is clasp domain. The precursor leader stretch occupies residues 382-404 (TGDIAREKELTNDEIANNHGAPY). At serine 408 the chain carries N-methylserine. Alanine 409 is subject to N-methylalanine. Valine 410 bears the N-methylvaline mark. 2 positions are modified to N-methylisoleucine: isoleucine 411 and isoleucine 412. 2 positions are modified to N-methylalanine: alanine 413 and alanine 414. Isoleucine 415 and isoleucine 416 each carry N-methylisoleucine.

In the N-terminal section; belongs to the precorrin methyltransferase family. In terms of assembly, homodimer. In terms of processing, gjuMA automethylates at Ser-408, Ala-409, Val-410, Ile-411, Ile-412, Ala-413, Ala-414, Ile-415 and Ile-416 before being processed by ae prolyloligopeptidase which likely forms a peptidyl ester upon removal of the follower propeptide, which then undergoes macrocyclization with the N-terminus of the modified core peptide. Peptide backbone alpha-N-methylations change the physicochemical properties of amide bonds to provide structural constraints and other favorable characteristics including biological membrane permeability to peptides.

It functions in the pathway secondary metabolite biosynthesis. In terms of biological role, fusion protein of the methyltransferase gjuM and the type I borosin core peptide; part of the gene cluster that mediates the biosynthesis of a type I borosin, a highly methylated cyclic peptide with potent biological activities. Type I borosins derive from the C-terminus of the fusion protein, and it is the same protein that methylates its own C-terminus using S-adenosyl methionine (SAM). The C-terminus is subsequently cleaved off and macrocyclized by a prolyloligopeptidase to give the final product. This chain is Methyltransferase/ribosomally synthesized type I borosin cyclic peptide precursor gjuMa, found in Gymnopilus junonius (Spectacular rustgill mushroom).